The primary structure comprises 122 residues: MKTEKQKLGAVGENLVATHYVRRGYGIVERNVRYPFGELDLIVEDSDGTTVFVEVKTRRGTGFGAAESVTGRKLTRMRRAATTWLQGRHYREIRFDVVTVVIDPTTGGYVLDHFEGVDDGAR.

Belongs to the UPF0102 family.

This Corynebacterium efficiens (strain DSM 44549 / YS-314 / AJ 12310 / JCM 11189 / NBRC 100395) protein is UPF0102 protein CE1920.